The chain runs to 140 residues: Probable disulfide formation protein C 2 (140 aa).

The chain crosses the membrane as a helical span at residues 6–25 (KYHIAIAWTIATSAMLISLI). C35 and C38 are joined by a disulfide. Transmembrane regions (helical) follow at residues 40–59 (YQRM…MYRK) and 66–83 (YAFP…YQIT). A disulfide bridge links C95 with C101. A helical transmembrane segment spans residues 110-134 (GFISIPMLSFVGFLAIIILLYINQI).

The protein belongs to the DsbB family. BdbC subfamily.

The protein localises to the cell membrane. Its function is as follows. Required for disulfide bond formation in some proteins. This is Probable disulfide formation protein C 2 (bdbC2) from Bacillus anthracis.